The sequence spans 241 residues: MSTKPKPRYRRILLKMSGEALMGNQAFGLDPKVVNRIADEVRQLHEAGVQVAIVIGGGNLFRGAQLAALGMERVTGDHMGMLATLMNSLAMQDALEQIGVPVRTVSALRVDEICEPYIRRRAIRHLEKGNVVISAAGTGNPFFTTDSAASLRAIELEVDAMFKATKVDGIYTKDPNRYDDAVKYHDLSYQKALTDNLGVMDATSIVMCRDNHMPLIVFDMTKAGEIIRAVFGEDVGTIVHA.

15 to 18 provides a ligand contact to ATP; sequence KMSG. Gly-57 is a binding site for UMP. Residues Gly-58 and Arg-62 each contribute to the ATP site. UMP is bound by residues Asp-77 and 138–145; that span reads TGNPFFTT. ATP-binding residues include Thr-165, Tyr-171, and Asp-174.

It belongs to the UMP kinase family. Homohexamer.

It is found in the cytoplasm. It catalyses the reaction UMP + ATP = UDP + ADP. Its pathway is pyrimidine metabolism; CTP biosynthesis via de novo pathway; UDP from UMP (UMPK route): step 1/1. Its activity is regulated as follows. Inhibited by UTP. Its function is as follows. Catalyzes the reversible phosphorylation of UMP to UDP. This chain is Uridylate kinase, found in Dichelobacter nodosus (strain VCS1703A).